We begin with the raw amino-acid sequence, 145 residues long: D-aminoacyl-tRNA deacylase (145 aa).

Positions 137–138 match the Gly-cisPro motif, important for rejection of L-amino acids motif; that stretch reads GP.

This sequence belongs to the DTD family. In terms of assembly, homodimer.

The protein localises to the cytoplasm. It carries out the reaction glycyl-tRNA(Ala) + H2O = tRNA(Ala) + glycine + H(+). The catalysed reaction is a D-aminoacyl-tRNA + H2O = a tRNA + a D-alpha-amino acid + H(+). An aminoacyl-tRNA editing enzyme that deacylates mischarged D-aminoacyl-tRNAs. Also deacylates mischarged glycyl-tRNA(Ala), protecting cells against glycine mischarging by AlaRS. Acts via tRNA-based rather than protein-based catalysis; rejects L-amino acids rather than detecting D-amino acids in the active site. By recycling D-aminoacyl-tRNA to D-amino acids and free tRNA molecules, this enzyme counteracts the toxicity associated with the formation of D-aminoacyl-tRNA entities in vivo and helps enforce protein L-homochirality. This Pseudomonas aeruginosa (strain LESB58) protein is D-aminoacyl-tRNA deacylase.